Reading from the N-terminus, the 449-residue chain is 3-phosphoshikimate 1-carboxyvinyltransferase (449 aa).

Residues 1-30 (MSHDSSPQPLTAAPGAPLRGRLRPPGDKSI) are disordered. Residues Lys28, Ser29, and Arg33 each coordinate 3-phosphoshikimate. A phosphoenolpyruvate-binding site is contributed by Lys28. Phosphoenolpyruvate-binding residues include Gly101 and Arg129. 3-phosphoshikimate contacts are provided by Ser175, Gln177, Asp330, and Lys357. Gln177 lines the phosphoenolpyruvate pocket. The active-site Proton acceptor is the Asp330. Phosphoenolpyruvate contacts are provided by Arg361 and Arg405.

It belongs to the EPSP synthase family. In terms of assembly, monomer.

The protein resides in the cytoplasm. The enzyme catalyses 3-phosphoshikimate + phosphoenolpyruvate = 5-O-(1-carboxyvinyl)-3-phosphoshikimate + phosphate. It participates in metabolic intermediate biosynthesis; chorismate biosynthesis; chorismate from D-erythrose 4-phosphate and phosphoenolpyruvate: step 6/7. Functionally, catalyzes the transfer of the enolpyruvyl moiety of phosphoenolpyruvate (PEP) to the 5-hydroxyl of shikimate-3-phosphate (S3P) to produce enolpyruvyl shikimate-3-phosphate and inorganic phosphate. This chain is 3-phosphoshikimate 1-carboxyvinyltransferase, found in Methylobacterium radiotolerans (strain ATCC 27329 / DSM 1819 / JCM 2831 / NBRC 15690 / NCIMB 10815 / 0-1).